The sequence spans 318 residues: Nuclear egress protein 1 (318 aa).

The segment at Cys129–His239 adopts a CCCH-type zinc-finger fold.

Belongs to the herpesviridae NEC1 protein family. In terms of assembly, forms a heterodimeric viral nuclear egress complex (NEC) with NEC2. Interacts with capsid vertex specific component 2/CVC2; this interaction directs the capsid to the host inner nuclear membrane to initiate budding. Post-translationally, phosphorylated at serine residues in the N-terminus. This phosphorylation regulates the localization within the inner nuclear membrane.

The protein localises to the host nucleus inner membrane. Functionally, plays an essential role in virion nuclear egress, the first step of virion release from infected cell. Within the host nucleus, NEC1 interacts with the newly formed capsid through the vertexes and directs it to the inner nuclear membrane by associating with NEC2. Induces the budding of the capsid at the inner nuclear membrane as well as its envelopment into the perinuclear space. There, the NEC1/NEC2 complex promotes the fusion of the enveloped capsid with the outer nuclear membrane and the subsequent release of the viral capsid into the cytoplasm where it will reach the secondary budding sites in the host Golgi or trans-Golgi network. This is Nuclear egress protein 1 from Homo sapiens (Human).